The following is a 79-amino-acid chain: uncharacterized protein (79 aa).

This is an uncharacterized protein from Streptomyces lividans.